The sequence spans 875 residues: Probable ATP-dependent RNA helicase DDX10 (875 aa).

Positions 1 to 43 are disordered; that stretch reads MGKTANSPGSGARPDPVRSFNRWKKKHSHRQNKKKQLRKQLKK. T4 is modified (phosphothreonine). S7 is modified (phosphoserine). The span at 21–41 shows a compositional bias: basic residues; that stretch reads NRWKKKHSHRQNKKKQLRKQL. The Q motif motif lies at 69–97; it reads TRFSDFPLSKKTLKGLQEAQYRLVTEIQK. Residues 89 to 91, Q96, and 113 to 120 each bind ATP; these read YRL and AKTGSGKT. The region spanning 100 to 274 is the Helicase ATP-binding domain; the sequence is IGLALQGKDV…RLSLKNPEYV (175 aa). The short motif at 222-225 is the DEAD box element; that stretch reads DEAD. The region spanning 287-448 is the Helicase C-terminal domain; it reads TLEQNYIVCE…EIKINPEKLI (162 aa). A Phosphoserine modification is found at S539. K555 is subject to N6-acetyllysine. Positions 562-631 are disordered; sequence GGKRLEGTEH…QFLDRDEEEE (70 aa). The segment covering 564 to 575 has biased composition (basic and acidic residues); the sequence is KRLEGTEHRQDN. T577 carries the phosphothreonine modification. Residues 577-593 are compositionally biased toward acidic residues; sequence TGNEEQEEEEDDEEEME. Residues 603–613 show a composition bias toward polar residues; the sequence is QAPSLPNTSEA. K649 participates in a covalent cross-link: Glycyl lysine isopeptide (Lys-Gly) (interchain with G-Cter in SUMO2). Positions 703–850 are disordered; that stretch reads MQKSAIKDAE…HNRKKARWDT (148 aa). A compositionally biased stretch (basic and acidic residues) spans 727–741; sequence ERLQEEDKFDKEEYR. Positions 742–751 are enriched in basic residues; the sequence is KKIKAKHREK. Residues 752–771 show a composition bias toward basic and acidic residues; that stretch reads RLKEREARREANKRQAKAKD. The span at 772–790 shows a compositional bias: acidic residues; the sequence is EEEAFLDWSDDDDDDDDGF. S780 bears the Phosphoserine mark. The span at 812-821 shows a compositional bias: basic and acidic residues; that stretch reads MENKISDTKK. The residue at position 831 (S831) is a Phosphoserine.

The protein belongs to the DEAD box helicase family. DDX10/DBP4 subfamily. As to quaternary structure, interacts with AIM2; this interaction promotes AIM2 stability. Interacts with SCNA; this interaction causes DDX10 mislocalization to the nucleoplasm and cytoplasmic inclusions. High in testis but widely expressed.

The protein localises to the cytoplasm. Its subcellular location is the nucleus. The protein resides in the nucleolus. It catalyses the reaction ATP + H2O = ADP + phosphate + H(+). Its function is as follows. Putative ATP-dependent RNA helicase that plays various role in innate immunity or inflammation. Plays a role in the enhancement of AIM2-induced inflammasome activation by interacting with AIM2 and stabilizing its protein level. Negatively regulates viral infection by promoting interferon beta production and interferon stimulated genes/ISGs expression. In Homo sapiens (Human), this protein is Probable ATP-dependent RNA helicase DDX10 (DDX10).